The following is a 587-amino-acid chain: Kelch-like protein 3 (587 aa).

Positions 1-24 (MEGESVKPSPQPTEQAGDGEKNRR) are disordered. A BTB domain is found at 50-117 (CDVMIVAEDV…IYTAEIEVTE (68 aa)). In terms of domain architecture, BACK spans 152 to 254 (CLGIRAFADV…PRDYLVQTVE (103 aa)). Phosphothreonine is present on threonine 295. 6 Kelch repeats span residues 302–347 (VMIV…FMAG), 348–394 (HVYA…VLND), 396–441 (LYAV…VVEG), 442–490 (KLYA…VLSG), 491–537 (QLYA…AVNG), and 539–585 (LYVV…VSAS). A Phosphothreonine modification is found at threonine 375. A phosphoserine mark is found at serine 376 and serine 433.

It belongs to the KLHL3 family. Homodimer. Component of the BCR(KLHL3) E3 ubiquitin ligase complex, at least composed of CUL3 and KLHL3 and RBX1. Interacts with CLDN8. Phosphorylation at Ser-433 by PKA or PKC decreases the interaction with WNK1 and WNK4, leading to inhibit their degradation by the BCR(KLHL3) complex. Phosphorylated at Ser-433 by PKC in response to angiotensin II signaling, decreasing ability to promote degradation of WNK1 and WNK4, leading to activation of Na-Cl cotransporter SLC12A3/NCC. Phosphorylation at Ser-433 is increased by insulin. Dephosphorylated at Ser-433 by calcineurin PPP3CA, promoting degradation of WNK1 and WNK4.

It localises to the cytoplasm. It is found in the cytoskeleton. Its subcellular location is the cytosol. Its pathway is protein modification; protein ubiquitination. Its function is as follows. Substrate-specific adapter of a BCR (BTB-CUL3-RBX1) E3 ubiquitin ligase complex that acts as a regulator of ion transport in the distal nephron. The BCR(KLHL3) complex acts by mediating ubiquitination and degradation of WNK1 and WNK4, two activators of Na-Cl cotransporter SLC12A3/NCC in distal convoluted tubule cells of kidney, thereby regulating NaCl reabsorption. The BCR(KLHL3) complex also mediates ubiquitination and degradation of WNK3. The BCR(KLHL3) complex also mediates ubiquitination of CLDN8, a tight-junction protein required for paracellular chloride transport in the kidney, leading to its degradation. The sequence is that of Kelch-like protein 3 (Klhl3) from Rattus norvegicus (Rat).